Consider the following 440-residue polypeptide: MESQQLSNYPNISHGSACASVTSKEVHTNQDPLDVSASKIQEYDKASTKANSQQTTTPASSAVPENLHHASPQPASVPPPQNGPYPQQCMMTQNQANPSGWSFYGHPSMIPYTPYQMSPMYFPPGPQSQFPQYPSSVGTPLSTPSPESGNTFTDSSSADSDMTSTKKYVRPPPMLTSPNDFPNWVKTYIKFLQNSNLGGIIPTVNGKPVRQITDDELTFLYNTFQIFAPSQFLPTWVKDILSVDYTDIMKILSKSIEKMQSDTQEANDIVTLANLQYNGSTPADAFETKVTNIIDRLNNNGIHINNKVACQLIMRGLSGEYKFLRYTRHRHLNMTVAELFLDIHAIYEEQQGSRNSKPNYRRNPSDEKNDSRSYTNTTKPKVIARNPQKTNNSKSKTARAHNVSTSNNSPSTDNDSISKSTTEPIQLNNKHDLHLRPETY.

3 stretches are compositionally biased toward polar residues: residues 1 to 23 (MESQ…SVTS), 48 to 60 (TKAN…TPAS), and 127 to 152 (QSQF…GNTF). Disordered stretches follow at residues 1 to 88 (MESQ…YPQQ), 126 to 173 (PQSQ…RPPP), and 352 to 440 (GSRN…PETY). Low complexity predominate over residues 153 to 165 (TDSSSADSDMTST). The RNA-binding stretch occupies residues 299 to 401 (NNGIHINNKV…NSKSKTARAH (103 aa)). Positions 402 to 418 (NVSTSNNSPSTDNDSIS) are enriched in low complexity. The residue at position 416 (Ser-416) is a Phosphoserine. Residues 419–428 (KSTTEPIQLN) are compositionally biased toward polar residues. The segment covering 429 to 440 (NKHDLHLRPETY) has biased composition (basic and acidic residues).

In terms of assembly, homotrimer.

It localises to the cytoplasm. Functionally, capsid protein (CA) is the structural component of the virus-like particle (VLP), forming the shell that encapsulates the retrotransposons dimeric RNA genome. The particles are assembled from trimer-clustered units and there are holes in the capsid shells that allow for the diffusion of macromolecules. CA also has nucleocapsid-like chaperone activity, promoting primer tRNA(i)-Met annealing to the multipartite primer-binding site (PBS), dimerization of Ty1 RNA and initiation of reverse transcription. The sequence is that of Transposon Ty1-ML1 Gag polyprotein (TY1A-ML1) from Saccharomyces cerevisiae (strain ATCC 204508 / S288c) (Baker's yeast).